A 200-amino-acid polypeptide reads, in one-letter code: GTP-binding protein rho2 (200 aa).

15–22 is a binding site for GTP; the sequence is GDGACGKT. The Effector region motif lies at 37–45; the sequence is YVPTVFENY. GTP-binding positions include 62–66 and 120–123; these read DTAGQ and MKAD. Cys197 bears the Cysteine methyl ester mark. Residue Cys197 is the site of S-geranylgeranyl cysteine attachment. The propeptide at 198–200 is removed in mature form; the sequence is IIS.

This sequence belongs to the small GTPase superfamily. Rho family. As to quaternary structure, interacts with pck2.

It is found in the cell membrane. Involved in cell morphogenesis, the maintenance of growth direction, control of polarity and of cell wall integrity. Regulates the synthesis of alpha-D-glucan through activation of pck2. In Schizosaccharomyces pombe (strain 972 / ATCC 24843) (Fission yeast), this protein is GTP-binding protein rho2 (rho2).